Reading from the N-terminus, the 441-residue chain is MSGPYDEASEEITDSFWEVGNYKRTVKRIDDGHRLCNDLMSCVQERAKIEKAYAQQLTDWAKRWRQLIEKGPQYGSLERAWGAMMTEADKVSELHQEVKNSLLNEDLEKVKNWQKDAYHKQIMGGFKETKEAEDGFRKAQKPWAKKMKELEAAKKAYHLACKEEKLAMTREMNSKTEQSVTPEQQKKLVDKVDKCRQDVQKTQEKYEKVLEDVGKTTPQYMEGMEQVFEQCQQFEEKRLVFLKEVLLDIKRHLNLAENSSYIHVYRELEQAIRGADAQEDLRWFRSTSGPGMPMNWPQFEEWNPDLPHTAAKKEKQPKKAEGAALSNATGAVESTSQAGDRGSVSSYDRGQAYATEWSDDESGNPFGGNEANGGANPFEDDAKGVRVRALYDYDGQEQDELSFKAGDELTKLGEEDEQGWCRGRLDSGQLGLYPANYVEAI.

Residues Ser2 and Ser76 each carry the phosphoserine modification. An F-BAR domain is found at 10–280 (EEITDSFWEV…AIRGADAQED (271 aa)). Residues 23 to 272 (KRTVKRIDDG…HVYRELEQAI (250 aa)) adopt a coiled-coil conformation. Residue Thr181 is modified to Phosphothreonine. The segment at 310-380 (AAKKEKQPKK…ANGGANPFED (71 aa)) is disordered. The span at 311-321 (AKKEKQPKKAE) shows a compositional bias: basic and acidic residues. Over residues 326–348 (SNATGAVESTSQAGDRGSVSSYD) the composition is skewed to polar residues. A phosphoserine mark is found at Ser343, Ser345, Ser346, Ser358, and Ser362. The region spanning 382-441 (AKGVRVRALYDYDGQEQDELSFKAGDELTKLGEEDEQGWCRGRLDSGQLGLYPANYVEAI) is the SH3 domain. Tyr391 is modified (phosphotyrosine). 2 positions are modified to phosphoserine: Ser402 and Ser427.

It belongs to the PACSIN family. Homodimer. May form heterooligomers with other PACSINs. Interacts with MAPT. Interacts with TRPV4. Interacts (via SH3 domain) with SYNJ1 and WASL. Interacts (via SH3 domain) with DNM1; the interaction is reduced by DNM1 phosphorylation. Interacts with DNM2 and DNM3. Interacts with both COBL and DBNL. Identified in a complex composed of COBL, PACSIN1 and WASL. Interacts with EHD1 and EHD3. Post-translationally, phosphorylated by casein kinase 2 (CK2) and protein kinase C (PKC). In terms of tissue distribution, highly expressed in brain (at protein level).

Its subcellular location is the cytoplasm. The protein localises to the cell projection. It localises to the synapse. The protein resides in the synaptosome. It is found in the ruffle membrane. Its subcellular location is the membrane. The protein localises to the cytoplasmic vesicle membrane. It localises to the cytosol. The protein resides in the cell membrane. Binds to membranes via its F-BAR domain and mediates membrane tubulation. Plays a role in the reorganization of the microtubule cytoskeleton via its interaction with MAPT; this decreases microtubule stability and inhibits MAPT-induced microtubule polymerization. Plays a role in cellular transport processes by recruiting DNM1, DNM2 and DNM3 to membranes. Plays a role in the reorganization of the actin cytoskeleton and in neuron morphogenesis via its interaction with COBL and WASL, and by recruiting COBL to the cell cortex. Plays a role in the regulation of neurite formation, neurite branching and the regulation of neurite length. Required for normal synaptic vesicle endocytosis; this process retrieves previously released neurotransmitters to accommodate multiple cycles of neurotransmission. Required for normal excitatory and inhibitory synaptic transmission. In Rattus norvegicus (Rat), this protein is Protein kinase C and casein kinase substrate in neurons protein 1 (Pacsin1).